Reading from the N-terminus, the 409-residue chain is Nucleoprotein (409 aa).

Disordered stretches follow at residues 1–32, 45–69, 122–145, 164–194, and 238–259; these read MASGKATGKTDAPAPVIKLGGPKPPKVGSSGN, NSHPPKFEGSGVPDNENLKTSQQHG, DVKSRSHQGTRDPDKFDQYPLRFS, RSGRSTAASSAASSRAPSRDGSRGRRSGSED, and VDQVFGPRTKGKEGNFGDDKMN. Positions 15–31 are enriched in low complexity; sequence PVIKLGGPKPPKVGSSG. An RNA-binding region spans residues 29–160; the sequence is SSGNASWFQA…GNFRWDFIPL (132 aa). The 126-residue stretch at 31–156 folds into the CoV N NTD domain; it reads GNASWFQAIK…GGPDGNFRWD (126 aa). The segment covering 122–138 has biased composition (basic and acidic residues); that stretch reads DVKSRSHQGTRDPDKFD. Residues 164–179 are compositionally biased toward low complexity; sequence RSGRSTAASSAASSRA. 2 stretches are compositionally biased toward basic and acidic residues: residues 180–192 and 247–259; these read PSRDGSRGRRSGS and KGKEGNFGDDKMN. Ser190 and Ser192 each carry phosphoserine; by host. The CoV N CTD domain occupies 219–331; the sequence is ADEMAHRRYC…QCVDGVGTRP (113 aa). Residues 226-333 form a dimerization region; it reads RYCKRTIPPG…VDGVGTRPKD (108 aa). A disulfide bridge links Cys320 with Cys323. Residues 326-409 form a disordered region; that stretch reads GVGTRPKDDE…GDSALGENEL (84 aa). Over residues 341-357 the composition is skewed to low complexity; sequence RSSSRPATRTSSPAPRQ. Basic residues predominate over residues 358-367; the sequence is QRPKKEKKPK. Thr378 is modified (phosphothreonine; by host). Ser379 is subject to Phosphoserine; by host.

The protein belongs to the gammacoronavirus nucleocapsid protein family. In terms of assembly, homooligomer. Both monomeric and oligomeric forms interact with RNA. Interacts with protein M. Interacts with NSP3; this interaction serves to tether the genome to the newly translated replicase-transcriptase complex at a very early stage of infection. Post-translationally, ADP-ribosylated. The ADP-ribosylation is retained in the virion during infection. Phosphorylated on serine and threonine residues.

It is found in the virion. Its subcellular location is the host endoplasmic reticulum-Golgi intermediate compartment. The protein localises to the host Golgi apparatus. Functionally, packages the positive strand viral genome RNA into a helical ribonucleocapsid (RNP) and plays a fundamental role during virion assembly through its interactions with the viral genome and membrane protein M. Plays an important role in enhancing the efficiency of subgenomic viral RNA transcription as well as viral replication. The sequence is that of Nucleoprotein from Avian infectious bronchitis virus (strain Arkansas 99) (IBV).